A 374-amino-acid polypeptide reads, in one-letter code: Alcohol dehydrogenase 1 (374 aa).

The residue at position 1 (Ser1) is an N-acetylserine. Zn(2+) contacts are provided by Cys46, His67, Cys97, Cys100, Cys103, Cys111, and Cys174. NAD(+) is bound by residues 199-204 (GLGGVG), Asp223, Lys228, 292-294 (VGV), and Arg369.

It belongs to the zinc-containing alcohol dehydrogenase family. Class-I subfamily. It depends on Zn(2+) as a cofactor.

Its subcellular location is the cytoplasm. The enzyme catalyses a primary alcohol + NAD(+) = an aldehyde + NADH + H(+). The catalysed reaction is a secondary alcohol + NAD(+) = a ketone + NADH + H(+). In Alligator mississippiensis (American alligator), this protein is Alcohol dehydrogenase 1.